A 199-amino-acid chain; its full sequence is Recombination protein RecR (199 aa).

A C4-type zinc finger spans residues 57-72 (CSVCGNITEDDPCPIC). Residues 80-176 (SRVLVVERSR…KVTRLAHGLS (97 aa)) enclose the Toprim domain.

Belongs to the RecR family.

Functionally, may play a role in DNA repair. It seems to be involved in an RecBC-independent recombinational process of DNA repair. It may act with RecF and RecO. The chain is Recombination protein RecR from Limosilactobacillus fermentum (strain NBRC 3956 / LMG 18251) (Lactobacillus fermentum).